A 150-amino-acid polypeptide reads, in one-letter code: 3-hydroxyacyl-[acyl-carrier-protein] dehydratase FabZ (150 aa).

H47 is an active-site residue.

The protein belongs to the thioester dehydratase family. FabZ subfamily.

The protein resides in the cytoplasm. The enzyme catalyses a (3R)-hydroxyacyl-[ACP] = a (2E)-enoyl-[ACP] + H2O. Its function is as follows. Involved in unsaturated fatty acids biosynthesis. Catalyzes the dehydration of short chain beta-hydroxyacyl-ACPs and long chain saturated and unsaturated beta-hydroxyacyl-ACPs. This Verminephrobacter eiseniae (strain EF01-2) protein is 3-hydroxyacyl-[acyl-carrier-protein] dehydratase FabZ.